The sequence spans 751 residues: MTISPPEREAKKVKIVVDRNPVETSLEKWAKPGHFSRALSKGPTTTTWIWNLHADAHDFDSHTSDLEDISRKVFSAHFGQLGIIFIWLSGMYFHGARFSNYEAWLSDPTHIKPSAQVVWPVVGQEILNGDVGGGFQGIQITSGFFQLWRASGITSELQLYATAIGGLVMAAAMFFAGWFHYHKAAPKLEWFQNVESMMNHHLAGLLGLGSLAWAGHQIHISLPINKLLDAGVDPKEIPLPHELMLNRELMAQLYPSFAKGLAPFFTLNWGEYSDFLTFQGGLNPVTGGLWLSDEAHHHLAIAVLFLIAGHQYRTNWGIGHSMKEILEAHKGPFTGEGHKGLYEILTTSWHAQLAINLAMLGSLSIIVAHHMYAMPPYPYLATDYGTQLSLFTHHVWIGGFCIVGAGAHAAIFMVRDYDPTNNYNNLLDRVIRHRDAIISHLNWVCIFLGFHSFGLYIHNDTMSALGRPQDMFSDTAIQLQPVFAQWVQNTHFLAPQLTAPNALAATSVSWGGDVVAVGGKVAMMPIALGTSDFLVHHIHAFTIHVTVLILLKGVLYSRSSRLIPDKANLGFRFPCDGPGRGGTCQVSAWDHVFLGLFWMYNSLSIVIFHFSWKMQSDVWGSVTASGVTHITGGNFAASANTINGWLRDFLWAQSSQVIQSYGSALSAYGLMFLGAHFVWAFSLMFLFSGRGYWQELIESIVWAHNKLKVAPAIQPRALSITQGRAVGVAHYLLGGIATTWSFFLARIISVG.

Helical transmembrane passes span 73 to 96, 159 to 182, 198 to 222, 294 to 312, 349 to 372, 388 to 414, 436 to 458, and 533 to 551; these read VFSA…FHGA, LYAT…FHYH, MNHH…HISL, EAHH…GHQY, WHAQ…HHMY, LSLF…IFMV, AIIS…LYIH, and FLVH…LILL. C575 and C584 together coordinate [4Fe-4S] cluster. Transmembrane regions (helical) follow at residues 591–612 and 665–687; these read HVFL…HFSW and LSAY…MFLF. Residue H676 participates in chlorophyll a' binding. Chlorophyll a is bound by residues M684 and Y692. W693 contributes to the phylloquinone binding site. A helical transmembrane segment spans residues 725 to 745; that stretch reads AVGVAHYLLGGIATTWSFFLA.

This sequence belongs to the PsaA/PsaB family. In terms of assembly, the PsaA/B heterodimer binds the P700 chlorophyll special pair and subsequent electron acceptors. PSI consists of a core antenna complex that captures photons, and an electron transfer chain that converts photonic excitation into a charge separation. The eukaryotic PSI reaction center is composed of at least 11 subunits. The cofactor is P700 is a chlorophyll a/chlorophyll a' dimer, A0 is one or more chlorophyll a, A1 is one or both phylloquinones and FX is a shared 4Fe-4S iron-sulfur center..

The protein resides in the plastid. Its subcellular location is the chloroplast thylakoid membrane. It catalyses the reaction reduced [plastocyanin] + hnu + oxidized [2Fe-2S]-[ferredoxin] = oxidized [plastocyanin] + reduced [2Fe-2S]-[ferredoxin]. Its function is as follows. PsaA and PsaB bind P700, the primary electron donor of photosystem I (PSI), as well as the electron acceptors A0, A1 and FX. PSI is a plastocyanin/cytochrome c6-ferredoxin oxidoreductase, converting photonic excitation into a charge separation, which transfers an electron from the donor P700 chlorophyll pair to the spectroscopically characterized acceptors A0, A1, FX, FA and FB in turn. Oxidized P700 is reduced on the lumenal side of the thylakoid membrane by plastocyanin or cytochrome c6. This chain is Photosystem I P700 chlorophyll a apoprotein A1, found in Oltmannsiellopsis viridis (Marine flagellate).